A 138-amino-acid chain; its full sequence is Large-conductance mechanosensitive channel (138 aa).

3 helical membrane passes run 15–35 (VDLA…NSIV), 38–58 (IIMP…MFIQ), and 80–100 (GNFI…FLVV).

The protein belongs to the MscL family. Homopentamer.

It localises to the cell inner membrane. In terms of biological role, channel that opens in response to stretch forces in the membrane lipid bilayer. May participate in the regulation of osmotic pressure changes within the cell. The protein is Large-conductance mechanosensitive channel of Brucella canis (strain ATCC 23365 / NCTC 10854 / RM-666).